Here is a 153-residue protein sequence, read N- to C-terminus: Large ribosomal subunit protein uL15 (153 aa).

The interval 1–48 (MRLNELSPAPGSKKDRKRVGRGDAGRGNYSGRGMKGQKARSGGATRPG) is disordered.

It belongs to the universal ribosomal protein uL15 family. In terms of assembly, part of the 50S ribosomal subunit.

In terms of biological role, binds to the 23S rRNA. This Dehalococcoides mccartyi (strain ATCC BAA-2266 / KCTC 15142 / 195) (Dehalococcoides ethenogenes (strain 195)) protein is Large ribosomal subunit protein uL15.